The sequence spans 123 residues: Glycine cleavage system H protein (123 aa).

Residues 22–104 enclose the Lipoyl-binding domain; it reads VATVGITSYA…FGAGWLVKVR (83 aa). Lysine 63 is modified (N6-lipoyllysine).

Belongs to the GcvH family. As to quaternary structure, the glycine cleavage system is composed of four proteins: P, T, L and H. It depends on (R)-lipoate as a cofactor.

Functionally, the glycine cleavage system catalyzes the degradation of glycine. The H protein shuttles the methylamine group of glycine from the P protein to the T protein. This is Glycine cleavage system H protein from Clavibacter sepedonicus (Clavibacter michiganensis subsp. sepedonicus).